Here is a 287-residue protein sequence, read N- to C-terminus: MSYTTRQIGAKNTLDYRVFIEKAGKVVSPFHDIPLYADEENQIFNMVVEIPRWTNAKLEITKEEAMNPIIQDTKKGKLRYVRNCFPHHGYIHNYGAFPQTWEDPNVAHPETKAYGDNDPLDVLEIGETIAYTGQVKQVKVLGVMALLDEGETDWKIIVIDVHDPLAPKLNDIEDVEKHLPGLLRATNEWFRIYKIPDGKPENQFAFSGEAKNRKYALDVIRECHEAWCQLVAGKAADDKKVSLANSTLQESVAYAPEVAAAVPAANPLPDAPIDKSIDKWFFISGSA.

Position 79 (arginine 79) interacts with diphosphate. Mg(2+) contacts are provided by aspartate 116, aspartate 121, and aspartate 153.

Belongs to the PPase family. Requires Mg(2+) as cofactor.

The protein resides in the cytoplasm. It carries out the reaction diphosphate + H2O = 2 phosphate + H(+). The polypeptide is Inorganic pyrophosphatase (IPP1) (Eremothecium gossypii (strain ATCC 10895 / CBS 109.51 / FGSC 9923 / NRRL Y-1056) (Yeast)).